A 273-amino-acid polypeptide reads, in one-letter code: NADPH-dependent 7-cyano-7-deazaguanine reductase (273 aa).

Residue 80-82 (VES) coordinates substrate. 82–83 (SK) provides a ligand contact to NADPH. The active-site Thioimide intermediate is the C180. D187 (proton donor) is an active-site residue. 219–220 (HE) contacts substrate. 248–249 (RG) is a binding site for NADPH.

Belongs to the GTP cyclohydrolase I family. QueF type 2 subfamily. In terms of assembly, homodimer.

It is found in the cytoplasm. The enzyme catalyses 7-aminomethyl-7-carbaguanine + 2 NADP(+) = 7-cyano-7-deazaguanine + 2 NADPH + 3 H(+). The protein operates within tRNA modification; tRNA-queuosine biosynthesis. Catalyzes the NADPH-dependent reduction of 7-cyano-7-deazaguanine (preQ0) to 7-aminomethyl-7-deazaguanine (preQ1). The protein is NADPH-dependent 7-cyano-7-deazaguanine reductase of Bordetella bronchiseptica (strain ATCC BAA-588 / NCTC 13252 / RB50) (Alcaligenes bronchisepticus).